Here is a 509-residue protein sequence, read N- to C-terminus: Galactose-1-phosphate uridylyltransferase (509 aa).

This sequence belongs to the galactose-1-phosphate uridylyltransferase type 2 family.

Its subcellular location is the cytoplasm. The catalysed reaction is alpha-D-galactose 1-phosphate + UDP-alpha-D-glucose = alpha-D-glucose 1-phosphate + UDP-alpha-D-galactose. The protein operates within carbohydrate metabolism; galactose metabolism. The sequence is that of Galactose-1-phosphate uridylyltransferase from Fusobacterium nucleatum subsp. nucleatum (strain ATCC 25586 / DSM 15643 / BCRC 10681 / CIP 101130 / JCM 8532 / KCTC 2640 / LMG 13131 / VPI 4355).